Consider the following 830-residue polypeptide: Receptor-like protein kinase HERK 1 (830 aa).

A signal peptide spans Met-1–Gly-24. The Extracellular segment spans residues Phe-25–Gly-405. N-linked (GlcNAc...) asparagine glycosylation is found at Asn-40, Asn-146, Asn-217, Asn-280, and Asn-381. The helical transmembrane segment at Leu-406–Val-426 threads the bilayer. Residues Leu-427 to Arg-830 are Cytoplasmic-facing. The Protein kinase domain maps to Phe-485–Ala-758. Residues Ile-491 to Val-499 and Lys-513 contribute to the ATP site. Residue Asp-609 is the Proton acceptor of the active site.

Belongs to the protein kinase superfamily. Ser/Thr protein kinase family. Autophosphorylated. Expressed in most vegetative tissues, including leaves, stems and roots, especially in cell elongation regions.

The protein localises to the cell membrane. Functionally, receptor-like protein kinase required for cell elongation during vegetative growth, mostly in a brassinosteroid-(BR-) independent manner. This is Receptor-like protein kinase HERK 1 (HERK1) from Arabidopsis thaliana (Mouse-ear cress).